The chain runs to 211 residues: Urease accessory protein UreF (211 aa).

The disordered stretch occupies residues 68 to 93 (LAPDGADRETDARTPSPAARDASRSQ).

The protein belongs to the UreF family. UreD, UreF and UreG form a complex that acts as a GTP-hydrolysis-dependent molecular chaperone, activating the urease apoprotein by helping to assemble the nickel containing metallocenter of UreC. The UreE protein probably delivers the nickel.

Its subcellular location is the cytoplasm. In terms of biological role, required for maturation of urease via the functional incorporation of the urease nickel metallocenter. In Mycobacterium marinum (strain ATCC BAA-535 / M), this protein is Urease accessory protein UreF.